The chain runs to 370 residues: UDP-N-acetylglucosamine--N-acetylmuramyl-(pentapeptide) pyrophosphoryl-undecaprenol N-acetylglucosamine transferase (370 aa).

UDP-N-acetyl-alpha-D-glucosamine-binding positions include 15-17 (TGG), asparagine 129, arginine 171, serine 200, isoleucine 256, and glutamine 301.

This sequence belongs to the glycosyltransferase 28 family. MurG subfamily.

It localises to the cell membrane. It carries out the reaction di-trans,octa-cis-undecaprenyl diphospho-N-acetyl-alpha-D-muramoyl-L-alanyl-D-glutamyl-meso-2,6-diaminopimeloyl-D-alanyl-D-alanine + UDP-N-acetyl-alpha-D-glucosamine = di-trans,octa-cis-undecaprenyl diphospho-[N-acetyl-alpha-D-glucosaminyl-(1-&gt;4)]-N-acetyl-alpha-D-muramoyl-L-alanyl-D-glutamyl-meso-2,6-diaminopimeloyl-D-alanyl-D-alanine + UDP + H(+). The protein operates within cell wall biogenesis; peptidoglycan biosynthesis. In terms of biological role, cell wall formation. Catalyzes the transfer of a GlcNAc subunit on undecaprenyl-pyrophosphoryl-MurNAc-pentapeptide (lipid intermediate I) to form undecaprenyl-pyrophosphoryl-MurNAc-(pentapeptide)GlcNAc (lipid intermediate II). This chain is UDP-N-acetylglucosamine--N-acetylmuramyl-(pentapeptide) pyrophosphoryl-undecaprenol N-acetylglucosamine transferase, found in Caldicellulosiruptor saccharolyticus (strain ATCC 43494 / DSM 8903 / Tp8T 6331).